The following is a 226-amino-acid chain: MRRATLCLLLLLAGPSWAGQMAISAMPGGAVIFKKVESIRERRFANLVEQKTDFSCGAAALATILRQAYWLDVDEEHVIKGMLVNADQDLVRTQGFSMLDMKRYLESIGMRARGYKIGPDTLLTVKIPVVVLVEIRGYKHFVVMQRAEKDWVYIGDPVLGNKRLSRDDFLAGWNGIVFAVLGEGYDKANALLDPPTPLTAKTKMNEFRPVGDAELMDFGFIQSDFF.

Residues 1-18 (MRRATLCLLLLLAGPSWA) form the signal peptide. The Peptidase C39 domain occupies 50 to 180 (QKTDFSCGAA…AGWNGIVFAV (131 aa)). Cys56 is a catalytic residue.

This sequence belongs to the FapD family.

It is found in the periplasm. Probable cysteine protease that is involved in processing fibril precursors. Upon overexpression of the endogenous six-gene locus (fapA-fapF) in situ, cells form large clumps during liquid growth, make large amounts of biofilm and produce amyloid fibrils. Expression of the 6 gene operon in E.coli strain BL21(DE3) induces flocculation and biofilm formation with copious extracellular fibrils. This is Probable functional amyloid protease FapD from Pseudomonas fluorescens.